Here is a 255-residue protein sequence, read N- to C-terminus: MDTVSLEHQIQSVQRHISFLKKEQMALLRDLHLEILRLQKRCSELTHDLEMREAQSHQQEAASRELESKCRALESQLEARAAANAELRREVAQREALVSALRCSLRTEERRFLEELRRRSHRATVLGTELQKHTEAAAYLSCQLHAARQRLQAPRPGPGATAEPRPRRRALRARRPPAAHEAAAKGPGRDWAAWDRGAGALDDADPMPDPALFLYARRPLRPSARSPRQPPPQEPPDRAGPQPAPSQPSAPGDPE.

A coiled-coil region spans residues 28–90 (LRDLHLEILR…AAANAELRRE (63 aa)). Residues 149–255 (QRLQAPRPGP…SQPSAPGDPE (107 aa)) form a disordered region. Basic residues predominate over residues 166–177 (PRRRALRARRPP). Over residues 242 to 255 (QPAPSQPSAPGDPE) the composition is skewed to pro residues.

The polypeptide is Coiled-coil domain-containing 92B (Homo sapiens (Human)).